Here is a 308-residue protein sequence, read N- to C-terminus: MPADDDDASYLLCAEDAGAAVFDVAVDISTCTTEDDECCSVGGEELYSAASIAELIGGEAEYSPRSDYPDRLRSRSIDPAARAESVSWILKVQEYNGFLPLTAYLAVNYMDRFLSLRHLPEGQGWAMQLLAVACLSLAAKMEETLVPSLLDLQVECSRYVFEPRTICRMEFLILTALNWRLRSVTPFTFIDFFACKHISNAMVQNANSDIQFLDHCPSSMAAAAVLCATGETPSLAFVNPELAVNWCIGLAEEGISSCYQLMQQLVIGNVQRSAAAAAAVNLFSDEGLSYDSSSPPPPKRRKRSPPGT.

Residues 286–308 (EGLSYDSSSPPPPKRRKRSPPGT) are disordered. Basic residues predominate over residues 298–308 (PKRRKRSPPGT).

Belongs to the cyclin family. Cyclin D subfamily.

The protein is Cyclin-D2-1 (CYCD2-1) of Oryza sativa subsp. japonica (Rice).